Consider the following 104-residue polypeptide: Naphthalene 1,2-dioxygenase/salicylate 5-hydroxylase systems, ferredoxin component (104 aa).

The region spanning 6–101 (IDAACLDDIP…VKIENMRVML (96 aa)) is the Rieske domain. [2Fe-2S] cluster-binding residues include C45, H47, C64, and H67.

Belongs to the bacterial ring-hydroxylating dioxygenase ferredoxin component family. In terms of assembly, ferredoxin NagAb belongs to both the salicylate 5-hydroxylase (S5H) and the naphthalene 1,2-dioxygenase (NDO) multicomponent enzyme systems. The NDO multicomponent enzyme system is composed of an electron transfer component and a dioxygenase component (iron sulfur protein (ISP)). The electron transfer component is composed of a ferredoxin reductase (NagAa) and a ferredoxin (NagAb), and the dioxygenase component is formed by a large alpha subunit (NagAc) and a small beta subunit (NagAd). The S5H multicomponent enzyme system is composed of an electron transfer component and a monooxygenase component. The electron transfer component is composed of a ferredoxin reductase (NagAa) and a ferredoxin (NagAb), and the monooxygenase component is formed by a large subunit (NagG) and a small subunit (NagH). [2Fe-2S] cluster is required as a cofactor.

Its pathway is aromatic compound metabolism; naphthalene degradation. In terms of biological role, component of two multicomponent enzyme systems which are involved in the catabolism of naphthalene. Plays a role as an electron transfer component for both salicylate 5-hydroxylase (S5H) and naphthalene 1,2-dioxygenase (NDO) systems, by transferring electrons to the oxygenase components. The protein is Naphthalene 1,2-dioxygenase/salicylate 5-hydroxylase systems, ferredoxin component of Ralstonia sp.